Here is a 191-residue protein sequence, read N- to C-terminus: Leucyl/phenylalanyl-tRNA--protein transferase (191 aa).

This sequence belongs to the L/F-transferase family.

The protein localises to the cytoplasm. The catalysed reaction is N-terminal L-lysyl-[protein] + L-leucyl-tRNA(Leu) = N-terminal L-leucyl-L-lysyl-[protein] + tRNA(Leu) + H(+). It catalyses the reaction N-terminal L-arginyl-[protein] + L-leucyl-tRNA(Leu) = N-terminal L-leucyl-L-arginyl-[protein] + tRNA(Leu) + H(+). It carries out the reaction L-phenylalanyl-tRNA(Phe) + an N-terminal L-alpha-aminoacyl-[protein] = an N-terminal L-phenylalanyl-L-alpha-aminoacyl-[protein] + tRNA(Phe). Its function is as follows. Functions in the N-end rule pathway of protein degradation where it conjugates Leu, Phe and, less efficiently, Met from aminoacyl-tRNAs to the N-termini of proteins containing an N-terminal arginine or lysine. The chain is Leucyl/phenylalanyl-tRNA--protein transferase from Nostoc punctiforme (strain ATCC 29133 / PCC 73102).